A 96-amino-acid chain; its full sequence is NADH-ubiquinone oxidoreductase chain 6 (96 aa).

The next 2 membrane-spanning stretches (helical) occupy residues 24–44 and 48–68; these read MSLL…LGSI and WFAY…FIYV.

Belongs to the complex I subunit 6 family.

It is found in the mitochondrion membrane. It catalyses the reaction a ubiquinone + NADH + 5 H(+)(in) = a ubiquinol + NAD(+) + 4 H(+)(out). In terms of biological role, core subunit of the mitochondrial membrane respiratory chain NADH dehydrogenase (Complex I) that is believed to belong to the minimal assembly required for catalysis. Complex I functions in the transfer of electrons from NADH to the respiratory chain. The immediate electron acceptor for the enzyme is believed to be ubiquinone. In Albinaria turrita (Door snail), this protein is NADH-ubiquinone oxidoreductase chain 6 (ND6).